A 794-amino-acid polypeptide reads, in one-letter code: Lon protease (794 aa).

Residues 29–222 (VPLLPLRGVL…TLISIIQDEQ (194 aa)) enclose the Lon N-terminal domain. 374–381 (GPPGVGKT) lines the ATP pocket. The Lon proteolytic domain occupies 610–791 (TDQVGMATGL…DEVLEHALVG (182 aa)). Catalysis depends on residues Ser-697 and Lys-740.

This sequence belongs to the peptidase S16 family. As to quaternary structure, homohexamer. Organized in a ring with a central cavity.

It is found in the cytoplasm. The enzyme catalyses Hydrolysis of proteins in presence of ATP.. In terms of biological role, ATP-dependent serine protease that mediates the selective degradation of mutant and abnormal proteins as well as certain short-lived regulatory proteins. Required for cellular homeostasis and for survival from DNA damage and developmental changes induced by stress. Degrades polypeptides processively to yield small peptide fragments that are 5 to 10 amino acids long. Binds to DNA in a double-stranded, site-specific manner. This chain is Lon protease, found in Bacillus thuringiensis (strain Al Hakam).